Here is a 399-residue protein sequence, read N- to C-terminus: Coenzyme A biosynthesis bifunctional protein CoaBC (399 aa).

The segment at 1 to 190 (MQSLAGKKIL…FAPKILVGKR (190 aa)) is phosphopantothenoylcysteine decarboxylase. The active-site Proton donor is Cys159. Positions 191-399 (VLITAGPTRE…AVMHLIHEQM (209 aa)) are phosphopantothenate--cysteine ligase. CTP-binding positions include Asp279, Lys289, 307-310 (PDIV), Phe326, Lys340, and Lys344.

In the N-terminal section; belongs to the HFCD (homo-oligomeric flavin containing Cys decarboxylase) superfamily. It in the C-terminal section; belongs to the PPC synthetase family. The cofactor is Mg(2+). FMN is required as a cofactor.

The catalysed reaction is N-[(R)-4-phosphopantothenoyl]-L-cysteine + H(+) = (R)-4'-phosphopantetheine + CO2. It catalyses the reaction (R)-4'-phosphopantothenate + L-cysteine + CTP = N-[(R)-4-phosphopantothenoyl]-L-cysteine + CMP + diphosphate + H(+). It functions in the pathway cofactor biosynthesis; coenzyme A biosynthesis; CoA from (R)-pantothenate: step 2/5. It participates in cofactor biosynthesis; coenzyme A biosynthesis; CoA from (R)-pantothenate: step 3/5. Its function is as follows. Catalyzes two sequential steps in the biosynthesis of coenzyme A. In the first step cysteine is conjugated to 4'-phosphopantothenate to form 4-phosphopantothenoylcysteine. In the second step the latter compound is decarboxylated to form 4'-phosphopantotheine. The protein is Coenzyme A biosynthesis bifunctional protein CoaBC of Vibrio cholerae serotype O1 (strain ATCC 39315 / El Tor Inaba N16961).